The primary structure comprises 677 residues: Envelope glycoprotein (677 aa).

An N-terminal signal peptide occupies residues 1–33 (MGSGYQLLQLPRERFRKTSFLVWVIILFQRAIS). Residues 34 to 651 (MPLGIVTNST…DLNLWTGWRQ (618 aa)) lie on the Extracellular side of the membrane. N-linked (GlcNAc...) asparagine; by host glycosylation is present at Asn41. 5 cysteine pairs are disulfide-bonded: Cys54–Cys610, Cys109–Cys136, Cys122–Cys148, Cys512–Cys557, and Cys602–Cys609. The receptor-binding stretch occupies residues 55 to 202 (RDKLSSTSQL…HFWKATPAHE (148 aa)). N-linked (GlcNAc...) asparagine; by host glycosylation is found at Asn205, Asn239, Asn258, Asn269, Asn297, Asn317, Asn318, Asn339, Asn406, Asn420, Asn435, and Asn463. Positions 306 to 486 (NLHFQILSTH…PSQPGFTINT (181 aa)) are mucin-like region. The span at 315–326 (HTNNSSDQSPAG) shows a compositional bias: polar residues. Disordered regions lie at residues 315 to 349 (HTNNSSDQSPAGTVQGKISYHPPTNNSELVPTDSP), 370 to 482 (NGET…QPGF), and 489 to 508 (KVADSLSPTRKQKRSVRQNT). 2 stretches are compositionally biased toward polar residues: residues 370–421 (NGET…ASNE) and 429–472 (NPIQ…TSPG). The interval 525 to 540 (GAAVGLAWIPYFGPAA) is fusion peptide. A coiled-coil region spans residues 555-596 (LICGLRQLANETTQALQLFLRATTELRTYSLLNRKAIDFLLQ). Asn564 carries an N-linked (GlcNAc...) asparagine; by host glycan. Positions 616 to 635 (WTKNITDEINQIKHDFIDNP) form a coiled coil. Asn619 carries an N-linked (GlcNAc...) asparagine; by host glycan. The helical transmembrane segment at 652–672 (WIPAGIGIIGVIIAIIALLCI) threads the bilayer. S-palmitoyl cysteine; by host attachment occurs at residues Cys671 and Cys673. The Cytoplasmic portion of the chain corresponds to 673–677 (CKILC).

The protein belongs to the filoviruses glycoprotein family. As to quaternary structure, homotrimer; each monomer consists of a GP1 and a GP2 subunit linked by disulfide bonds. The resulting peplomers (GP1,2) protrude from the virus surface as spikes. Interacts with host integrin alpha-V/ITGAV. Interacts with host CLEC10A. Binds also to host CD209 and CLEC4M/DC-SIGN(R). Interacts with host FOLR1. Interacts with BST2; this interaction inhibits the antiviral effect of BST2 and this allows viral release from infected cells. Interacts with host FCN1; this interaction enhances viral entry. Interacts with host TLR4; this interaction induces cell death in T-lymphocytes or proinflammatory cytokines and SOCS1 production in monocytes. In terms of assembly, interacts with host entry receptor NPC1. GP1 and GP2delta are part of GP1,2delta soluble complexes released by ectodomain shedding. In terms of processing, the signal peptide region modulates GP's high mannose glycosylation, thereby determining the efficiency of the interactions with DC-SIGN(R). Post-translationally, N-glycosylated. O-glycosylated in the mucin-like region. In terms of processing, palmitoylation of GP2 is not required for its function. Post-translationally, specific enzymatic cleavages in vivo yield mature proteins. The precursor is processed into GP1 and GP2 by host cell furin in the trans Golgi, and maybe by other host proteases, to yield the mature GP1 and GP2 proteins. The cleavage site corresponds to the furin optimal cleavage sequence [KR]-X-[KR]-R. This cleavage does not seem to be required for function. After the internalization of the virus into cell endosomes, GP1 C-terminus is removed by the endosomal proteases cathepsin B, cathepsin L, or both, leaving a 19-kDa N-terminal fragment which is further digested by cathepsin B. Proteolytic processing of GP1,2 by host ADAM17 can remove the transmembrane anchor of GP2 and leads to shedding of complexes consisting in GP1 and truncated GP2 (GP1,2delta).

Its subcellular location is the virion membrane. The protein resides in the host cell membrane. It is found in the secreted. In terms of biological role, trimeric GP1,2 complexes form the virion surface spikes and mediate the viral entry processes, with GP1 acting as the receptor-binding subunit and GP2 as the membrane fusion subunit. At later times of infection, down-regulates the expression of various host cell surface molecules that are essential for immune surveillance and cell adhesion. Down-modulates several integrins including ITGA1, ITGA2, ITGA3, ITGA4, ITGA5, ITGA6, ITGAV and ITGB1. This decrease in cell adhesion molecules may lead to cell detachment, contributing to the disruption of blood vessel integrity and hemorrhages developed during infection (cytotoxicity). Interacts with host TLR4 and thereby stimulates the differentiation and activation of monocytes leading to bystander death of T-lymphocytes. Down-regulates as well the function of host natural killer cells. Counteracts the antiviral effect of host BST2/tetherin that restricts release of progeny virions from infected cells. However, cooperates with VP40 and host BST2 to activate canonical NF-kappa-B pathway in a manner dependent on neddylation. Its function is as follows. Functions as a decoy for anti-GP1,2 antibodies thereby contributing to viral immune evasion. Interacts and activates host macrophages and dendritic cells inducing up-regulation of cytokine transcription. This effect is mediated throught activation of host TLR4. Responsible for binding to the receptor(s) on target cells. Interacts with CD209/DC-SIGN and CLEC4M/DC-SIGNR which act as cofactors for virus entry into dendritic cells (DCs) and endothelial cells. Binding to the macrophage specific lectin CLEC10A also seems to enhance virus infectivity. Interaction with FOLR1/folate receptor alpha may be a cofactor for virus entry in some cell types, although results are contradictory. Members of the Tyro3 receptor tyrosine kinase family also seem to be cell entry factors in filovirus infection. Once attached, the virions are internalized through clathrin-dependent endocytosis and/or macropinocytosis. After internalization of the virus into the endosomes of the host cell, proteolysis of GP1 by two cysteine proteases, CTSB/cathepsin B and CTSL/cathepsin L removes the glycan cap and allows GP1 binding to the host entry receptor NPC1. NPC1-binding, Ca(2+) and acidic pH induce a conformational change of GP2, which unmasks its fusion peptide and permit membranes fusion. Functionally, acts as a class I viral fusion protein. Under the current model, the protein has at least 3 conformational states: pre-fusion native state, pre-hairpin intermediate state, and post-fusion hairpin state. During viral and target cell membrane fusion, the coiled coil regions (heptad repeats) assume a trimer-of-hairpins structure, positioning the fusion peptide in close proximity to the C-terminal region of the ectodomain. The formation of this structure appears to drive apposition and subsequent fusion of viral and target cell membranes. Responsible for penetration of the virus into the cell cytoplasm by mediating the fusion of the membrane of the endocytosed virus particle with the endosomal membrane. Low pH in endosomes induces an irreversible conformational change in GP2, releasing the fusion hydrophobic peptide. The chain is Envelope glycoprotein (GP) from Homo sapiens (Human).